A 368-amino-acid chain; its full sequence is Anaphase-promoting complex subunit MND2 (368 aa).

Disordered stretches follow at residues 140-167 and 286-336; these read AQNAEGNNEEDFRQHDSREEDPRNNGSI and RNPY…GITP. A compositionally biased stretch (basic and acidic residues) spans 149–162; sequence EDFRQHDSREEDPR. The residue at position 293 (Ser-293) is a Phosphoserine.

It belongs to the APC15 family. As to quaternary structure, the APC/C is composed of at least 13 subunits that stay tightly associated throughout the cell cycle: APC1, APC2, APC4, APC5, APC9, APC11, CDC16, CDC23, CDC26, CDC27, DOC1, MND2 and SWM1. MND2 interacts directly with APC1, APC5 and CDC23.

Its pathway is protein modification; protein ubiquitination. Functionally, component of the anaphase promoting complex/cyclosome (APC/C), a cell cycle-regulated E3 ubiquitin-protein ligase complex that controls progression through mitosis and the G1 phase of the cell cycle. The APC/C is thought to confer substrate specificity and, in the presence of ubiquitin-conjugating E2 enzymes, it catalyzes the formation of protein-ubiquitin conjugates that are subsequently degraded by the 26S proteasome. In early mitosis, the APC/C is activated by CDC20 and targets securin PDS1, the B-type cyclin CLB5, and other anaphase inhibitory proteins for proteolysis, thereby triggering the separation of sister chromatids at the metaphase-to-anaphase transition. In late mitosis and in G1, degradation of CLB5 allows activation of the APC/C by CDH1, which is needed to destroy CDC20 and the B-type cyclin CLB2 to allow exit from mitosis and creating the low CDK state necessary for cytokinesis and for reforming prereplicative complexes in G1 prior to another round of replication. The sequence is that of Anaphase-promoting complex subunit MND2 (MND2) from Saccharomyces cerevisiae (strain ATCC 204508 / S288c) (Baker's yeast).